Consider the following 436-residue polypeptide: Testican-3 (436 aa).

A signal peptide spans 1–21; the sequence is MLKVSAVLCVCAAAWCSQSLA. 8 disulfide bridges follow: Cys-90–Cys-101, Cys-95–Cys-111, Cys-139–Cys-169, Cys-142–Cys-162, Cys-151–Cys-183, Cys-317–Cys-341, Cys-352–Cys-359, and Cys-361–Cys-380. One can recognise a Kazal-like domain in the interval 133–185; it reads GPILSTCKQCPVVYPSPVCGSDGHTYSFQCKLEYQACVLGKQISVKCEGHCPC. One can recognise a Thyroglobulin type-1 domain in the interval 314–380; the sequence is DPPCQTELSN…GSRINGVADC (67 aa). O-linked (Xyl...) (glycosaminoglycan) serine glycans are attached at residues Ser-387 and Ser-392. A disordered region spans residues 393-436; sequence GDFHEWTDDEDDEDDIMNDEDEIEDDDEDEGDDDDGGDDHDVYI. A compositionally biased stretch (acidic residues) spans 399–430; the sequence is TDDEDDEDDIMNDEDEIEDDDEDEGDDDDGGD.

Contains chondroitin sulfate and heparan sulfate O-linked oligosaccharides. As to expression, expressed in brain.

It is found in the secreted. The protein resides in the extracellular space. Its subcellular location is the extracellular matrix. Functionally, may participate in diverse steps of neurogenesis. Inhibits the processing of pro-matrix metalloproteinase 2 (MMP-2) by MT1-MMP and MT3-MMP. May interfere with tumor invasion. This is Testican-3 (SPOCK3) from Homo sapiens (Human).